The sequence spans 485 residues: Glutamate mutase epsilon subunit (485 aa).

Residue R100 participates in L-glutamate binding. N123 contacts adenosylcob(III)alamin. L-glutamate is bound by residues 149–150 and D171; that span reads KH. Residues P180, F297, K326, and E330 each contribute to the adenosylcob(III)alamin site.

The protein belongs to the methylaspartate mutase GlmE subunit family. As to quaternary structure, heterotetramer composed of 2 epsilon subunits (GlmE) and 2 sigma subunits (GlmS). GlmE exists as a homodimer and GlmS as a monomer. Adenosylcob(III)alamin is required as a cofactor.

The catalysed reaction is (2S,3S)-3-methyl-L-aspartate = L-glutamate. It participates in amino-acid degradation; L-glutamate degradation via mesaconate pathway; acetate and pyruvate from L-glutamate: step 1/4. Its function is as follows. Catalyzes the carbon skeleton rearrangement of L-glutamate to L-threo-3-methylaspartate ((2S,3S)-3-methylaspartate). The chain is Glutamate mutase epsilon subunit from Fusobacterium nucleatum subsp. nucleatum (strain ATCC 25586 / DSM 15643 / BCRC 10681 / CIP 101130 / JCM 8532 / KCTC 2640 / LMG 13131 / VPI 4355).